Consider the following 515-residue polypeptide: 2-(3-amino-3-carboxypropyl)histidine synthase subunit 2 (515 aa).

Positions 104, 125, and 353 each coordinate [4Fe-4S] cluster. Positions glycine 493–lysine 515 are disordered.

It belongs to the DPH1/DPH2 family. DPH2 subfamily. In terms of assembly, component of the 2-(3-amino-3-carboxypropyl)histidine synthase complex composed of DPH1, DPH2, DPH3 and a NADH-dependent reductase, predominantly CBR1. The cofactor is [4Fe-4S] cluster.

It is found in the cytoplasm. The protein operates within protein modification; peptidyl-diphthamide biosynthesis. Its function is as follows. Required for the first step of diphthamide biosynthesis, a post-translational modification of histidine which occurs in elongation factor 2. DPH1 and DPH2 transfer a 3-amino-3-carboxypropyl (ACP) group from S-adenosyl-L-methionine (SAM) to a histidine residue, the reaction is assisted by a reduction system comprising DPH3 and a NADH-dependent reductase, predominantly CBR1. Facilitates the reduction of the catalytic iron-sulfur cluster found in the DPH1 subunit. This Cryptococcus neoformans var. neoformans serotype D (strain B-3501A) (Filobasidiella neoformans) protein is 2-(3-amino-3-carboxypropyl)histidine synthase subunit 2 (DPH2).